A 145-amino-acid polypeptide reads, in one-letter code: Large-conductance mechanosensitive channel (145 aa).

3 helical membrane passes run 14-34, 38-58, and 81-101; these read VMDL…VKSL, LIMP…YFLP, and GSFL…FLMV.

Belongs to the MscL family. As to quaternary structure, homopentamer.

It localises to the cell inner membrane. Its function is as follows. Channel that opens in response to stretch forces in the membrane lipid bilayer. May participate in the regulation of osmotic pressure changes within the cell. The sequence is that of Large-conductance mechanosensitive channel from Rhizobium etli (strain CIAT 652).